Reading from the N-terminus, the 361-residue chain is Caffeic acid 3-O-methyltransferase 1 (361 aa).

M128 to L134 serves as a coordination point for substrate. Positions A160 to M178 are substrate binding. Residues G206, D229, D249, M250, and K263 each coordinate S-adenosyl-L-methionine. H267 (proton acceptor) is an active-site residue.

It belongs to the class I-like SAM-binding methyltransferase superfamily. Cation-independent O-methyltransferase family. COMT subfamily. Homodimer.

It carries out the reaction (E)-caffeate + S-adenosyl-L-methionine = (E)-ferulate + S-adenosyl-L-homocysteine + H(+). The protein operates within aromatic compound metabolism; phenylpropanoid biosynthesis. Its function is as follows. Catalyzes the conversion of caffeic acid to ferulic acid and of 5-hydroxyferulic acid to sinapic acid. The resulting products may subsequently be converted to the corresponding alcohols that are incorporated into lignins. The chain is Caffeic acid 3-O-methyltransferase 1 (COMT1) from Ocimum basilicum (Sweet basil).